The chain runs to 143 residues: Beta/delta-urticatoxin-Uf2a (143 aa).

The first 18 residues, 1 to 18, serve as a signal peptide directing secretion; that stretch reads MGAIVLVALMALVASSSA. A propeptide spanning residues 19–80 is cleaved from the precursor; it reads FSDIEHNIMK…MMLSGRPQPN (62 aa). Intrachain disulfides connect C83-C100, C90-C105, C99-C113, C115-C129, C122-C134, and C128-C142.

The protein belongs to the urticatoxin-2 family. As to expression, expressed in trichomes, that are stiff epidermal hairs located on the surface of petioles and leaves.

Its subcellular location is the secreted. Its function is as follows. Plant defense neurotoxin that causes pain and systemic symptoms in mammals via modulation of voltage-gated sodium channels (Nav). Potent modulator of human Nav1.5/SCN5A (EC(50)=55 nM), Nav1.6/SCN8A (EC(50)=0.86 nM), and Nav1.7/SCN9A (EC(50)=208 nM), where it shifts the activation threshold to more negative potentials and delays fast inactivation. Also shifts the voltage-dependence of steady-state fast inactivation of Nav1.6/SCN8A, but not that of Nav1.5/SCN5A or Nav1.7/SCN9A. On Nav1.7/SCN9A, principally acts by binding to extracellular loops of domain IV (Nav site 3). Does not affect current response of the tetrodotoxin (TTX)-resistant Nav1.8/SCN10A sodium channel. In vivo, intraplantar injection into mice causes numerous dose-dependent, immediate, and long-lasting spontaneous pain behaviors, while no swelling is observed in the injected paw. At the highest doses tested, systemic symptoms including hypokinesia and hypersalivation are observed. The protein is Beta/delta-urticatoxin-Uf2a of Urtica ferox (Tree nettle).